An 85-amino-acid polypeptide reads, in one-letter code: Large ribosomal subunit protein bL27 (85 aa).

The interval 1-21 (MAHKKGQGSTQNNRDSAGRRL) is disordered.

The protein belongs to the bacterial ribosomal protein bL27 family.

This Nitratiruptor sp. (strain SB155-2) protein is Large ribosomal subunit protein bL27.